The primary structure comprises 245 residues: tRNA1(Val) (adenine(37)-N6)-methyltransferase (245 aa).

The protein belongs to the methyltransferase superfamily. tRNA (adenine-N(6)-)-methyltransferase family.

It localises to the cytoplasm. It carries out the reaction adenosine(37) in tRNA1(Val) + S-adenosyl-L-methionine = N(6)-methyladenosine(37) in tRNA1(Val) + S-adenosyl-L-homocysteine + H(+). In terms of biological role, specifically methylates the adenine in position 37 of tRNA(1)(Val) (anticodon cmo5UAC). The sequence is that of tRNA1(Val) (adenine(37)-N6)-methyltransferase from Shigella dysenteriae serotype 1 (strain Sd197).